The chain runs to 245 residues: 5-oxoprolinase subunit A (245 aa).

Belongs to the LamB/PxpA family. In terms of assembly, forms a complex composed of PxpA, PxpB and PxpC.

The catalysed reaction is 5-oxo-L-proline + ATP + 2 H2O = L-glutamate + ADP + phosphate + H(+). Its function is as follows. Catalyzes the cleavage of 5-oxoproline to form L-glutamate coupled to the hydrolysis of ATP to ADP and inorganic phosphate. The polypeptide is 5-oxoprolinase subunit A (Chromobacterium violaceum (strain ATCC 12472 / DSM 30191 / JCM 1249 / CCUG 213 / NBRC 12614 / NCIMB 9131 / NCTC 9757 / MK)).